Reading from the N-terminus, the 139-residue chain is 3-hydroxyacyl-[acyl-carrier-protein] dehydratase FabZ (139 aa).

Residue histidine 46 is part of the active site.

The protein belongs to the thioester dehydratase family. FabZ subfamily.

It is found in the cytoplasm. It catalyses the reaction a (3R)-hydroxyacyl-[ACP] = a (2E)-enoyl-[ACP] + H2O. In terms of biological role, involved in unsaturated fatty acids biosynthesis. Catalyzes the dehydration of short chain beta-hydroxyacyl-ACPs and long chain saturated and unsaturated beta-hydroxyacyl-ACPs. The protein is 3-hydroxyacyl-[acyl-carrier-protein] dehydratase FabZ of Streptococcus pyogenes serotype M3 (strain ATCC BAA-595 / MGAS315).